We begin with the raw amino-acid sequence, 309 residues long: Taste receptor type 2 member 46 (309 aa).

Methionine 1 is a topological domain (extracellular). The helical transmembrane segment at 2–22 (ITFLPIIFSILIVVTFVIGNF) threads the bilayer. The Cytoplasmic segment spans residues 23–46 (ANGFIALVNSIEWFKRQKISFADQ). The helical transmembrane segment at 47–67 (ILTALAVSRVGLLWVLVLNWY) threads the bilayer. Over 68–86 (ATELNPAFNSIEVRITAYN) the chain is Extracellular. The helical transmembrane segment at 87 to 107 (VWAVINHFSNWLATSLSIFYL) threads the bilayer. The Cytoplasmic portion of the chain corresponds to 108–126 (LKIANFSNLIFLHLKRRVK). The chain crosses the membrane as a helical span at residues 127–147 (SVVLVILLGPLLFLVCHLFVI). At 148–178 (NMNQIIWTKEYEGNMTWKIKLRSAMYLSNTT) the chain is on the extracellular side. N-linked (GlcNAc...) asparagine glycosylation is found at asparagine 161 and asparagine 176. The chain crosses the membrane as a helical span at residues 179-199 (VTILANLVPFTLTLISFLLLI). At 200 to 229 (CSLCKHLKKMQLHGKGSQDPSMKVHIKALQ) the chain is on the cytoplasmic side. The chain crosses the membrane as a helical span at residues 230–250 (TVTSFLLLCAIYFLSIIMSVW). The Extracellular portion of the chain corresponds to 251–259 (SFESLENKP). The helical transmembrane segment at 260 to 280 (VFMFCEAIAFSYPSTHPFILI) threads the bilayer. The Cytoplasmic segment spans residues 281 to 309 (WGNKKLKQTFLSVLWHVRYWVKGEKPSSS).

Belongs to the G-protein coupled receptor T2R family. Expressed in subsets of taste receptor cells of the tongue and exclusively in gustducin-positive cells. Expressed on ciliated airway epithelium.

It localises to the membrane. The protein localises to the cell projection. The protein resides in the cilium membrane. Its function is as follows. Receptor that may play a role in the perception of bitterness and is gustducin-linked. May play a role in sensing the chemical composition of the gastrointestinal content. The activity of this receptor may stimulate alpha gustducin, mediate PLC-beta-2 activation and lead to the gating of TRPM5. In airway epithelial cells, binding of bitter compounds increases the intracellular calcium ion concentration and stimulates ciliary beat frequency. In Homo sapiens (Human), this protein is Taste receptor type 2 member 46 (TAS2R46).